The sequence spans 101 residues: Large ribosomal subunit protein eL21 (101 aa).

A compositionally biased stretch (basic residues) spans 1-18 (MVKHSKGYRTRSRSLLRK). Positions 1–24 (MVKHSKGYRTRSRSLLRKSPRERG) are disordered.

The protein belongs to the eukaryotic ribosomal protein eL21 family.

This Saccharolobus solfataricus (strain ATCC 35092 / DSM 1617 / JCM 11322 / P2) (Sulfolobus solfataricus) protein is Large ribosomal subunit protein eL21 (rpl21e).